A 205-amino-acid polypeptide reads, in one-letter code: High frequency lysogenization protein HflD homolog (205 aa).

It belongs to the HflD family.

The protein resides in the cytoplasm. It localises to the cell inner membrane. The sequence is that of High frequency lysogenization protein HflD homolog from Photobacterium profundum (strain SS9).